The chain runs to 407 residues: Peptidase T (407 aa).

His-77 serves as a coordination point for Zn(2+). Asp-79 is a catalytic residue. Asp-138 lines the Zn(2+) pocket. The active-site Proton acceptor is Glu-172. 3 residues coordinate Zn(2+): Glu-173, Asp-195, and His-377.

It belongs to the peptidase M20B family. It depends on Zn(2+) as a cofactor.

Its subcellular location is the cytoplasm. It carries out the reaction Release of the N-terminal residue from a tripeptide.. Cleaves the N-terminal amino acid of tripeptides. This Aeromonas salmonicida (strain A449) protein is Peptidase T.